The sequence spans 275 residues: Lectin (275 aa).

An N-terminal signal peptide occupies residues 1–30 (MASLQTQMISFYLIFLSILLTTIFFFKVNS). Residues Asp111 and Gly129 each coordinate D-glucose. Mn(2+) contacts are provided by Glu149 and Asp151. Ca(2+) contacts are provided by Asp151, Phe153, Asn155, and Asp159. The Mn(2+) site is built by Asp159 and His166. The propeptide occupies 211–217 (NSLEEEN). Residues Gly246 and Ala247 each coordinate D-glucose. The propeptide occupies 270-275 (KQAADA).

Belongs to the leguminous lectin family. As to quaternary structure, heterotetramer of two alpha and two beta chains. The mature form consists of two chains, alpha and beta, produced by cleavage of the immature protein. These remain cleaved, yet fold together to form one subunit.

Functionally, D-mannose specific lectin. This Lens culinaris subsp. culinaris (Cultivated lentil) protein is Lectin.